The following is a 303-amino-acid chain: N-acetyl-D-glucosamine kinase (303 aa).

ATP is bound by residues 4–11 (GFDIGGTK) and 133–140 (GVGGGLIF). Positions 157, 177, 179, and 184 each coordinate Zn(2+).

Belongs to the ROK (NagC/XylR) family. NagK subfamily.

It carries out the reaction N-acetyl-D-glucosamine + ATP = N-acetyl-D-glucosamine 6-phosphate + ADP + H(+). It participates in cell wall biogenesis; peptidoglycan recycling. In terms of biological role, catalyzes the phosphorylation of N-acetyl-D-glucosamine (GlcNAc) derived from cell-wall degradation, yielding GlcNAc-6-P. This is N-acetyl-D-glucosamine kinase from Shigella sonnei (strain Ss046).